The primary structure comprises 183 residues: Mitochondrial inner membrane protease subunit 2 (183 aa).

The helical transmembrane segment at 13 to 35 (AFVSGFFVAVPVTVTVLDRLAYV) threads the bilayer. Active-site residues include S42 and K90. A disordered region spans residues 161–183 (SVPPDRRPLLNWDRAAEDKYDDD). Basic and acidic residues predominate over residues 164–183 (PDRRPLLNWDRAAEDKYDDD).

The protein belongs to the peptidase S26 family. IMP2 subfamily. In terms of assembly, heterodimer of 2 subunits, IMMPL1 and IMMPL2.

It localises to the mitochondrion inner membrane. Its function is as follows. Catalyzes the removal of transit peptides required for the targeting of proteins from the mitochondrial matrix, across the inner membrane, into the inter-membrane space. The chain is Mitochondrial inner membrane protease subunit 2 (immp2l) from Danio rerio (Zebrafish).